We begin with the raw amino-acid sequence, 141 residues long: Hemoglobin subunit alpha (141 aa).

Residues 1-141 enclose the Globin domain; that stretch reads VLSPADKTNV…VSTVLTSKYR (141 aa). S3 is modified (phosphoserine). K7 carries the N6-succinyllysine modification. T8 carries the post-translational modification Phosphothreonine. The residue at position 11 (K11) is an N6-succinyllysine. Position 16 is an N6-acetyllysine; alternate (K16). At K16 the chain carries N6-succinyllysine; alternate. The residue at position 24 (Y24) is a Phosphotyrosine. Phosphoserine is present on S35. An N6-succinyllysine modification is found at K40. Position 49 is a phosphoserine (S49). H58 is an O2 binding site. Position 87 (H87) interacts with heme b. Phosphoserine is present on S102. At T108 the chain carries Phosphothreonine. S124 is subject to Phosphoserine. T134 and T137 each carry phosphothreonine. S138 is modified (phosphoserine).

This sequence belongs to the globin family. As to quaternary structure, heterotetramer of two alpha chains and two beta chains. As to expression, red blood cells.

Its function is as follows. Involved in oxygen transport from the lung to the various peripheral tissues. In terms of biological role, hemopressin acts as an antagonist peptide of the cannabinoid receptor CNR1. Hemopressin-binding efficiently blocks cannabinoid receptor CNR1 and subsequent signaling. This Pteronura brasiliensis (Giant otter) protein is Hemoglobin subunit alpha (HBA).